Here is a 77-residue protein sequence, read N- to C-terminus: U8-lycotoxin-Ls1m (77 aa).

The first 20 residues, 1-20 (MKLMIFTGLVLFAIVRLIEA), serve as a signal peptide directing secretion. The propeptide occupies 21–26 (QAENEK).

The protein belongs to the neurotoxin 19 (CSTX) family. 08 (U8-Lctx) subfamily. Post-translationally, contains 4 disulfide bonds. As to expression, expressed by the venom gland.

The protein localises to the secreted. This is U8-lycotoxin-Ls1m from Lycosa singoriensis (Wolf spider).